The following is a 489-amino-acid chain: Glycogen synthase (489 aa).

Lys15 provides a ligand contact to ADP-alpha-D-glucose.

The protein belongs to the glycosyltransferase 1 family. Bacterial/plant glycogen synthase subfamily.

The enzyme catalyses [(1-&gt;4)-alpha-D-glucosyl](n) + ADP-alpha-D-glucose = [(1-&gt;4)-alpha-D-glucosyl](n+1) + ADP + H(+). Its pathway is glycan biosynthesis; glycogen biosynthesis. Functionally, synthesizes alpha-1,4-glucan chains using ADP-glucose. This chain is Glycogen synthase, found in Francisella tularensis subsp. novicida (strain U112).